The chain runs to 90 residues: Small ribosomal subunit protein bS20 (90 aa).

The interval 1–25 is disordered; the sequence is MANSAQARKRARQAAKANSHNSALR.

This sequence belongs to the bacterial ribosomal protein bS20 family.

Binds directly to 16S ribosomal RNA. The chain is Small ribosomal subunit protein bS20 from Burkholderia multivorans (strain ATCC 17616 / 249).